The primary structure comprises 495 residues: Putative BTB/POZ domain-containing protein L98 (495 aa).

The 71-residue stretch at 15-85 folds into the BTB domain; it reads SDLTIEFVDN…FYGIETTNDY (71 aa).

It belongs to the mimivirus BTB/WD family.

In Acanthamoeba polyphaga (Amoeba), this protein is Putative BTB/POZ domain-containing protein L98.